We begin with the raw amino-acid sequence, 183 residues long: MSFEEEEKNKVTCTQDFLRQYFVSESVSIQFGLNNKTVKRINEDEFDKAINCIMAWTRYPEAVVKRTASTYLLSDSCKKSTTLSLPFVLDDALCIPKGVESNNNDTSLLYSDTLYGDDSLIRRNEQVRDELEEELSFTLLRSEINEIKPISSSSTPQILQSDYSAVMQETQASNGSIFQFSSP.

Its function is as follows. Potential transcriptional regulator that is required to activate expression of a number of early meiotic genes including HOP1. This chain is Meiotic recombination protein REC104 (REC104), found in Saccharomyces paradoxus (Yeast).